Consider the following 242-residue polypeptide: uncharacterized protein (242 aa).

The protein to E.coli MazG and to plasmid pIP1100 erythromycin esterase.

This is an uncharacterized protein from Streptomyces cacaoi.